Consider the following 453-residue polypeptide: Probable exopolygalacturonase B (453 aa).

An N-terminal signal peptide occupies residues 1–16 (MKFFALAALFASTVNS). N-linked (GlcNAc...) asparagine glycosylation is found at N185 and N225. D255 functions as the Proton donor in the catalytic mechanism. C257 and C274 form a disulfide bridge. N-linked (GlcNAc...) asparagine glycans are attached at residues N263 and N275. The active site involves H278. 2 PbH1 repeats span residues 295-316 (IENVWIENVTLLNGENGARLKA) and 327-348 (INNVTYKNIHVENTDNPIVLDQ). 4 N-linked (GlcNAc...) asparagine glycosylation sites follow: N302, N329, N354, and N366. One copy of the PbH1 3 repeat lies at 362–405 (PSRVNFTNIVFEDIYGTSSGKRGKVVADLTCSPNAVCSGIRLKN). A disulfide bridge links C392 with C398. An N-linked (GlcNAc...) asparagine glycan is attached at N436.

The protein belongs to the glycosyl hydrolase 28 family.

The protein localises to the secreted. The enzyme catalyses [(1-&gt;4)-alpha-D-galacturonosyl](n) + H2O = alpha-D-galacturonate + [(1-&gt;4)-alpha-D-galacturonosyl](n-1). Its function is as follows. Specific in hydrolyzing the terminal glycosidic bond of polygalacturonic acid and oligogalacturonates. In Aspergillus fumigatus (strain ATCC MYA-4609 / CBS 101355 / FGSC A1100 / Af293) (Neosartorya fumigata), this protein is Probable exopolygalacturonase B (pgxB).